A 122-amino-acid polypeptide reads, in one-letter code: Autophagy-related protein 8a (122 aa).

Residues 1 to 21 (MAKSSFKISNPLEARMSESSR) are disordered. A lipid anchor (Phosphatidylethanolamine amidated glycine) is attached at Gly-117. A propeptide spans 118-122 (SLTVA) (removed in mature form).

The protein belongs to the ATG8 family. Interacts with ATG4B. Interacts with NBR1. Post-translationally, the C-terminal 5 residues are removed by ATG4 to expose Gly-117 at the C-terminus. This Gly-117 forms then a thioester bond with the 'Cys-558' of ATG7 (E1-like activating enzyme) before being transferred to the 'Cys-258' of ATG3 (the specific E2 conjugating enzyme), in order to be finally amidated with phosphatidylethanolamine. This lipid modification anchors ATG8 to autophagosomes. In terms of tissue distribution, constitutively expressed.

It localises to the cytoplasmic vesicle. It is found in the autophagosome membrane. The protein localises to the vacuole membrane. The protein resides in the cytoplasm. Its subcellular location is the cytoskeleton. Functionally, ubiquitin-like modifier involved in autophagosomes formation. May mediate the delivery of the autophagosomes to the vacuole via the microtubule cytoskeleton. The chain is Autophagy-related protein 8a (ATG8A) from Arabidopsis thaliana (Mouse-ear cress).